The primary structure comprises 347 residues: Very-long-chain 3-oxoacyl-CoA reductase (347 aa).

Residues 20–40 traverse the membrane as a helical segment; that stretch reads LLWVVFGLGVLKCTTLSLRFL. The NADP(+) site is built by Asp120, Asn147, Tyr223, Lys227, Val256, and Ser258. Tyr223 acts as the Proton donor in catalysis. Lys227 serves as the catalytic Lowers pKa of active site Tyr.

It belongs to the short-chain dehydrogenases/reductases (SDR) family. As to quaternary structure, interacts with the fatty acid elongation system components ELO3 and TSC13.

The protein resides in the endoplasmic reticulum membrane. The enzyme catalyses a very-long-chain (3R)-3-hydroxyacyl-CoA + NADP(+) = a very-long-chain 3-oxoacyl-CoA + NADPH + H(+). The catalysed reaction is 3-oxooctadecanoyl-CoA + NADPH + H(+) = (3R)-hydroxyoctadecanoyl-CoA + NADP(+). It carries out the reaction 3-oxoeicosanoyl-CoA + NADPH + H(+) = (3R)-hydroxyeicosanoyl-CoA + NADP(+). It catalyses the reaction 3-oxodocosanoyl-CoA + NADPH + H(+) = (3R)-hydroxydocosanoyl-CoA + NADP(+). The enzyme catalyses 3-oxotetracosanoyl-CoA + NADPH + H(+) = (3R)-hydroxytetracosanoyl-CoA + NADP(+). The catalysed reaction is 3-oxohexacosanoyl-CoA + NADPH + H(+) = (3R)-hydroxyhexacosanoyl-CoA + NADP(+). Its pathway is lipid metabolism; fatty acid biosynthesis. In terms of biological role, component of the microsomal membrane bound fatty acid elongation system, which produces the 26-carbon very long-chain fatty acids (VLCFA) from palmitate. Catalyzes the reduction of the 3-ketoacyl-CoA intermediate that is formed in each cycle of fatty acid elongation. VLCFAs serve as precursors for ceramide and sphingolipids. This is Very-long-chain 3-oxoacyl-CoA reductase (IFA38) from Saccharomyces cerevisiae (strain ATCC 204508 / S288c) (Baker's yeast).